Consider the following 211-residue polypeptide: Hypoxanthine-guanine phosphoribosyltransferase (211 aa).

Residues 1–20 (MSNSAKSPSGPVGDEGRRNY) form a disordered region. Residues K66, 125 to 133 (EDIVDSAIT), K157, and D185 each bind GMP. The Proton acceptor role is filled by D129. Mg(2+) is bound at residue D185.

It belongs to the purine/pyrimidine phosphoribosyltransferase family. Mg(2+) serves as cofactor.

It localises to the cytoplasm. The catalysed reaction is IMP + diphosphate = hypoxanthine + 5-phospho-alpha-D-ribose 1-diphosphate. The enzyme catalyses GMP + diphosphate = guanine + 5-phospho-alpha-D-ribose 1-diphosphate. Its pathway is purine metabolism; IMP biosynthesis via salvage pathway; IMP from hypoxanthine: step 1/1. Functionally, converts guanine to guanosine monophosphate, and hypoxanthine to inosine monophosphate. Transfers the 5-phosphoribosyl group from 5-phosphoribosylpyrophosphate onto the purine. Plays a central role in the generation of purine nucleotides through the purine salvage pathway. The sequence is that of Hypoxanthine-guanine phosphoribosyltransferase from Leishmania donovani.